A 118-amino-acid polypeptide reads, in one-letter code: Small ribosomal subunit protein uS13 (118 aa).

Residues 91 to 118 (HRRSLPVRGQRTKTNARTRKGPRKPIKA) form a disordered region.

The protein belongs to the universal ribosomal protein uS13 family. Part of the 30S ribosomal subunit. Forms a loose heterodimer with protein S19. Forms two bridges to the 50S subunit in the 70S ribosome.

Functionally, located at the top of the head of the 30S subunit, it contacts several helices of the 16S rRNA. In the 70S ribosome it contacts the 23S rRNA (bridge B1a) and protein L5 of the 50S subunit (bridge B1b), connecting the 2 subunits; these bridges are implicated in subunit movement. Contacts the tRNAs in the A and P-sites. The chain is Small ribosomal subunit protein uS13 from Francisella philomiragia subsp. philomiragia (strain ATCC 25017 / CCUG 19701 / FSC 153 / O#319-036).